The sequence spans 392 residues: Cell division protein FtsZ (392 aa).

Residues 24–28, 111–113, glutamate 142, arginine 145, and aspartate 189 contribute to the GTP site; these read GGGCN and GTG.

Belongs to the FtsZ family. Homodimer. Polymerizes to form a dynamic ring structure in a strictly GTP-dependent manner. Interacts directly with several other division proteins.

It is found in the cytoplasm. Essential cell division protein that forms a contractile ring structure (Z ring) at the future cell division site. The regulation of the ring assembly controls the timing and the location of cell division. One of the functions of the FtsZ ring is to recruit other cell division proteins to the septum to produce a new cell wall between the dividing cells. Binds GTP and shows GTPase activity. The polypeptide is Cell division protein FtsZ (Neisseria gonorrhoeae).